We begin with the raw amino-acid sequence, 480 residues long: UDP-glycosyltransferase 72B1 (480 aa).

Catalysis depends on H19, which acts as the Proton acceptor. Residue D117 is the Charge relay of the active site. Residues S277, W346, A347, and H364 each contribute to the UDP site. UDP-alpha-D-glucose is bound by residues S277, W346, A347, H364, W367, N368, S369, E372, Y386, E388, and Q389. UDP-binding residues include N368, S369, E372, and Y386.

It belongs to the UDP-glycosyltransferase family.

The catalysed reaction is hydroquinone + UDP-alpha-D-glucose = hydroquinone O-beta-D-glucopyranoside + UDP + H(+). Its function is as follows. Bifunctional O-glycosyltransferase and N-glycosyltransferase that can detoxify xenobiotics. Possesses high activity to metabolize the persistent pollutants 2,4,5-trichlorophenol (TCP) and 3,4-dichloroaniline (DCA). Also active on benzoates and benzoate derivatives in vitro. This is UDP-glycosyltransferase 72B1 (UGT72B1) from Arabidopsis thaliana (Mouse-ear cress).